A 177-amino-acid chain; its full sequence is Large ribosomal subunit protein uL22 (177 aa).

A disordered region spans residues 118–177 (VESRPSREGRRGGAGESAGGARARRAQGSKAAAAKKAPASSSTKAATTTEASEEAKGGSQ). Basic and acidic residues predominate over residues 121-130 (RPSREGRRGG). Positions 145–167 (GSKAAAAKKAPASSSTKAATTTE) are enriched in low complexity.

The protein belongs to the universal ribosomal protein uL22 family. Part of the 50S ribosomal subunit.

In terms of biological role, this protein binds specifically to 23S rRNA; its binding is stimulated by other ribosomal proteins, e.g. L4, L17, and L20. It is important during the early stages of 50S assembly. It makes multiple contacts with different domains of the 23S rRNA in the assembled 50S subunit and ribosome. Functionally, the globular domain of the protein is located near the polypeptide exit tunnel on the outside of the subunit, while an extended beta-hairpin is found that lines the wall of the exit tunnel in the center of the 70S ribosome. The protein is Large ribosomal subunit protein uL22 of Mycobacterium sp. (strain JLS).